The following is a 25-amino-acid chain: VTIGPVCELPKEVGGPCRGHIIPRY.

Positions 6–25 (VCELPKEVGGPCRGHIIPRY) constitute a BPTI/Kunitz inhibitor domain.

It localises to the secreted. Inhibits bovine trypsin, human plasma kallikrein and human neutrophil elastase. In Rhipicephalus microplus (Cattle tick), this protein is Kunitz-type serine protease inhibitor 2.